The sequence spans 505 residues: tRNA-2-methylthio-N(6)-dimethylallyladenosine synthase (505 aa).

The MTTase N-terminal domain occupies 14-132 (RTYEVRTYGC…LPVLLERARV (119 aa)). Residues cysteine 23, cysteine 61, cysteine 95, cysteine 169, cysteine 173, and cysteine 176 each contribute to the [4Fe-4S] cluster site. A Radical SAM core domain is found at 155 to 386 (RESAYAAWVS…ALQEEISWEE (232 aa)). Residues 388–456 (KKQVGRTLEL…PHHLLAEGPV (69 aa)) form the TRAM domain.

The protein belongs to the methylthiotransferase family. MiaB subfamily. In terms of assembly, monomer. It depends on [4Fe-4S] cluster as a cofactor.

The protein resides in the cytoplasm. It catalyses the reaction N(6)-dimethylallyladenosine(37) in tRNA + (sulfur carrier)-SH + AH2 + 2 S-adenosyl-L-methionine = 2-methylsulfanyl-N(6)-dimethylallyladenosine(37) in tRNA + (sulfur carrier)-H + 5'-deoxyadenosine + L-methionine + A + S-adenosyl-L-homocysteine + 2 H(+). Functionally, catalyzes the methylthiolation of N6-(dimethylallyl)adenosine (i(6)A), leading to the formation of 2-methylthio-N6-(dimethylallyl)adenosine (ms(2)i(6)A) at position 37 in tRNAs that read codons beginning with uridine. The chain is tRNA-2-methylthio-N(6)-dimethylallyladenosine synthase from Streptomyces viridosporus (strain ATCC 14672 / DSM 40746 / JCM 4963 / KCTC 9882 / NRRL B-12104 / FH 1290) (Streptomyces ghanaensis).